Here is a 93-residue protein sequence, read N- to C-terminus: UPF0369 protein RC0209 (93 aa).

The disordered stretch occupies residues 1–24; that stretch reads MDDKKDNRHLSKPAYREECTGDTE. The 48-residue stretch at 8 to 55 folds into the RPE1 insert domain; sequence RHLSKPAYREECTGDTERSTTAYMDILEDVSTGSTSKLPLEAKFVKIS.

This sequence belongs to the SDHAF4 family.

This is UPF0369 protein RC0209 from Rickettsia conorii (strain ATCC VR-613 / Malish 7).